Reading from the N-terminus, the 271-residue chain is MKMFNNIKNTGKLIRLERIFDKKSEKTVIIPMDHGVSSGPVAGLKDMRTAINSVAEGGANSVLVHKGIVRHGHRGYGKDIGLIIHLSAGTGVSPDPNEKVIVTSVEEAIRMGADAVSVHVNMGAPTDCQMYQDLGKIAETCEYWGMPLIAMMYPRGEKITDEKDPEFVAHAARLGAELGADIIKTNYTGDIDSFKDVVKGCPAPIIIAGGAKSTDAEYLQMVKDSIEAGGAGVASGRNVFQHKDVIGITKATAMVVHENADVEEALKVIKK.

The active-site Proton acceptor is the Asp-33. Residues 33-37 and 153-155 contribute to the 1-deoxy-D-threo-hexo-2,5-diulose 6-phosphate site; these read DHGVS and YPR. Residue Tyr-153 is the Proton donor of the active site. The active-site Schiff-base intermediate with substrate is Lys-184. Residues 209-210 and 236-237 each bind 1-deoxy-D-threo-hexo-2,5-diulose 6-phosphate; these read GG and GR.

It belongs to the DeoC/FbaB aldolase family. ADHS subfamily. As to quaternary structure, homodecamer.

It carries out the reaction 1-deoxy-D-threo-hexo-2,5-diulose 6-phosphate + L-aspartate 4-semialdehyde = 2,3-dioxopropyl phosphate + 2-amino-2,3,7-trideoxy-D-lyxo-hept-6-ulosonate. Catalyzes a transaldol reaction between 6-deoxy-5-ketofructose 1-phosphate (DKFP) and L-aspartate semialdehyde (ASA) with an elimination of hydroxypyruvaldehyde phosphate to yield 2-amino-3,7-dideoxy-D-threo-hept-6-ulosonate (ADH). Plays a key role in an alternative pathway of the biosynthesis of 3-dehydroquinate (DHQ), which is involved in the canonical pathway for the biosynthesis of aromatic amino acids. In Methanococcus aeolicus (strain ATCC BAA-1280 / DSM 17508 / OCM 812 / Nankai-3), this protein is 2-amino-3,7-dideoxy-D-threo-hept-6-ulosonate synthase.